The chain runs to 236 residues: Leucyl/phenylalanyl-tRNA--protein transferase (236 aa).

This sequence belongs to the L/F-transferase family.

It is found in the cytoplasm. It catalyses the reaction N-terminal L-lysyl-[protein] + L-leucyl-tRNA(Leu) = N-terminal L-leucyl-L-lysyl-[protein] + tRNA(Leu) + H(+). The catalysed reaction is N-terminal L-arginyl-[protein] + L-leucyl-tRNA(Leu) = N-terminal L-leucyl-L-arginyl-[protein] + tRNA(Leu) + H(+). The enzyme catalyses L-phenylalanyl-tRNA(Phe) + an N-terminal L-alpha-aminoacyl-[protein] = an N-terminal L-phenylalanyl-L-alpha-aminoacyl-[protein] + tRNA(Phe). Functions in the N-end rule pathway of protein degradation where it conjugates Leu, Phe and, less efficiently, Met from aminoacyl-tRNAs to the N-termini of proteins containing an N-terminal arginine or lysine. This Shewanella halifaxensis (strain HAW-EB4) protein is Leucyl/phenylalanyl-tRNA--protein transferase.